The primary structure comprises 135 residues: U-myrmeciitoxin(01)-Mg7a (135 aa).

Positions 1-21 (MKLSCLSLALAIILLLAIVHS) are cleaved as a signal peptide. A propeptide spanning residues 22–72 (PNMEVKALAGPEADAIGFADAFGEADAFGEADAFGEADAFGEADAFGEADA) is cleaved from the precursor. The disordered stretch occupies residues 69–95 (EADAKRSKSSSKTKPKKPKKPKKKIKI). Residues 75-93 (SKSSSKTKPKKPKKPKKKI) are compositionally biased toward basic residues. Residue Ser120 is glycosylated (O-linked (GalNAc...) serine). Residues Thr129 and Thr130 are each glycosylated (O-linked (GalNAc...) threonine).

It belongs to the formicidae venom precursor-01 superfamily. In terms of processing, glycosylation is critical to maintaining the aqueous solubility of this protein, but does not directly contribute to its activity. Expressed by the venom gland.

It is found in the secreted. It localises to the target cell membrane. Neurotoxin that triggers pain behavior and inflammation in mammals, and is paralytic and lethal to insects. Causes a time-dependent increase in cell leak current. May act by targeting membranes. In Myrmecia gulosa (Red bulldog ant), this protein is U-myrmeciitoxin(01)-Mg7a.